Consider the following 462-residue polypeptide: MRCFRWWLYSGWWWLTFGCARTVTVGFVAPTVRAQSTVVRSEPAPPSETRRDNNDTSYFSSTSFHSSVSPATSVDRQFRRTTYDRWDGRRWLRTRYGNASACVTGTQWSTNFFFSQCEHYPSFVKLNGVQRWTPVRRPMGEVAYYGGCCMVGGGNRAYVILVSGYGTASYGNALRVDFGRGNCTAPKRTYPRRLELHDGRTDPSRCDPYQVYFYGLQCPEQLVITAHGGVGMRRCPTGSRPTPSRPHRHDLENELHGLCVDLLVCVLLLALLLLELVPMEAVRHPLLFWRRVALSPSTSKVDRAVKLCLRRMLGLPPPPSVAPPGEKKELPAQAALSPPLTTWSLPPFPSTRIPDSPPPPYQLRHATSLVTVPTLLLYTSSDIGDTASETTCVAHATYGEPPEPARSTATVQECTVLTAPNCGIVNNDGAVSEGQDHGDAVHHSLDVVSQCAADTGVVDTSE.

2 helical membrane-spanning segments follow: residues 12–32 and 257–277; these read WWWL…APTV and GLCV…LELV.

It belongs to the HHV-5 US29 protein family.

Its subcellular location is the host membrane. This is an uncharacterized protein from Homo sapiens (Human).